Here is a 261-residue protein sequence, read N- to C-terminus: Putative outer membrane protein TC_0650 (261 aa).

A signal peptide spans 1-17 (MRFLFAFILLCSPWVSE).

The protein resides in the cell outer membrane. The polypeptide is Putative outer membrane protein TC_0650 (Chlamydia muridarum (strain MoPn / Nigg)).